Here is a 403-residue protein sequence, read N- to C-terminus: uncharacterized protein (403 aa).

This is an uncharacterized protein from Aquifex aeolicus (strain VF5).